Reading from the N-terminus, the 500-residue chain is NAD(P)H-quinone oxidoreductase chain 4, chloroplastic (500 aa).

14 helical membrane passes run F4–L24, Y35–F55, I87–V107, L113–S130, L134–M154, F167–L187, I211–H231, H242–V262, A272–A292, I305–D325, G330–G350, L386–T406, I416–M436, and L462–V482.

This sequence belongs to the complex I subunit 4 family.

It is found in the plastid. Its subcellular location is the chloroplast thylakoid membrane. It carries out the reaction a plastoquinone + NADH + (n+1) H(+)(in) = a plastoquinol + NAD(+) + n H(+)(out). The enzyme catalyses a plastoquinone + NADPH + (n+1) H(+)(in) = a plastoquinol + NADP(+) + n H(+)(out). The chain is NAD(P)H-quinone oxidoreductase chain 4, chloroplastic from Olimarabidopsis pumila (Dwarf rocket).